A 325-amino-acid chain; its full sequence is All-trans-nonaprenyl-diphosphate synthase (geranyl-diphosphate specific) (325 aa).

Lysine 48, arginine 51, and histidine 81 together coordinate isopentenyl diphosphate. Residues aspartate 88 and aspartate 92 each coordinate Mg(2+). Residue arginine 97 participates in an all-trans-polyprenyl diphosphate binding. Arginine 98 serves as a coordination point for isopentenyl diphosphate. Lysine 174, threonine 175, glutamine 211, and lysine 228 together coordinate an all-trans-polyprenyl diphosphate.

This sequence belongs to the FPP/GGPP synthase family. In terms of assembly, homodimer. Mg(2+) is required as a cofactor.

The enzyme catalyses 7 isopentenyl diphosphate + (2E)-geranyl diphosphate = all-trans-nonaprenyl diphosphate + 7 diphosphate. Functionally, catalyzes the sequential condensation of isopentenyl diphosphate (IPP) with the allylic substrate to give solanesyl diphosphate. Could be important to determine the side chain length of ubiquinone. The polypeptide is All-trans-nonaprenyl-diphosphate synthase (geranyl-diphosphate specific) (sdsA) (Rhodobacter capsulatus (Rhodopseudomonas capsulata)).